The following is a 433-amino-acid chain: Cyclin-dependent kinase F-3 (433 aa).

The region spanning 4-283 is the Protein kinase domain; it reads YKVIREIGDG…AEQSLQHPFF (280 aa). ATP-binding positions include 10–18 and lysine 33; that span reads IGDGTCGNV. Aspartate 125 serves as the catalytic Proton acceptor. A Phosphoserine modification is found at serine 151. Threonine 156 carries the phosphothreonine modification.

The protein belongs to the protein kinase superfamily. CMGC Ser/Thr protein kinase family. CDC2/CDKX subfamily.

The enzyme catalyses L-seryl-[protein] + ATP = O-phospho-L-seryl-[protein] + ADP + H(+). It catalyses the reaction L-threonyl-[protein] + ATP = O-phospho-L-threonyl-[protein] + ADP + H(+). The catalysed reaction is [DNA-directed RNA polymerase] + ATP = phospho-[DNA-directed RNA polymerase] + ADP + H(+). This Oryza sativa subsp. japonica (Rice) protein is Cyclin-dependent kinase F-3 (CDKF-3).